The following is a 391-amino-acid chain: Chalcone synthase 2 (391 aa).

The active site involves Cys164.

This sequence belongs to the thiolase-like superfamily. Chalcone/stilbene synthases family.

It catalyses the reaction (E)-4-coumaroyl-CoA + 3 malonyl-CoA + 3 H(+) = 2',4,4',6'-tetrahydroxychalcone + 3 CO2 + 4 CoA. It participates in secondary metabolite biosynthesis; flavonoid biosynthesis. Functionally, the primary product of this enzyme is 4,2',4',6'-tetrahydroxychalcone (also termed naringenin-chalcone or chalcone) which can under specific conditions spontaneously isomerize into naringenin. The protein is Chalcone synthase 2 (CHS2) of Citrus sinensis (Sweet orange).